Consider the following 172-residue polypeptide: MRVLGVDPGLTRCGLGVVDGGLGIRAHLVEVGVVRTPATAEVAERLCAVSDGIDAWLDRTRPEAVAVEKVFSQANMRTVMGTAQAGAVAIVLAARRGLPVGLYTPSEVKAAVTGSGRADKAQVSFMITRLLGLTEAPRPADAADALALALCHLWRGPALARFRSAAPGGPTR.

Catalysis depends on residues Asp7, Glu68, and Asp141. Mg(2+)-binding residues include Asp7, Glu68, and Asp141.

Belongs to the RuvC family. Homodimer which binds Holliday junction (HJ) DNA. The HJ becomes 2-fold symmetrical on binding to RuvC with unstacked arms; it has a different conformation from HJ DNA in complex with RuvA. In the full resolvosome a probable DNA-RuvA(4)-RuvB(12)-RuvC(2) complex forms which resolves the HJ. The cofactor is Mg(2+).

It is found in the cytoplasm. It catalyses the reaction Endonucleolytic cleavage at a junction such as a reciprocal single-stranded crossover between two homologous DNA duplexes (Holliday junction).. Its function is as follows. The RuvA-RuvB-RuvC complex processes Holliday junction (HJ) DNA during genetic recombination and DNA repair. Endonuclease that resolves HJ intermediates. Cleaves cruciform DNA by making single-stranded nicks across the HJ at symmetrical positions within the homologous arms, yielding a 5'-phosphate and a 3'-hydroxyl group; requires a central core of homology in the junction. The consensus cleavage sequence is 5'-(A/T)TT(C/G)-3'. Cleavage occurs on the 3'-side of the TT dinucleotide at the point of strand exchange. HJ branch migration catalyzed by RuvA-RuvB allows RuvC to scan DNA until it finds its consensus sequence, where it cleaves and resolves the cruciform DNA. The sequence is that of Crossover junction endodeoxyribonuclease RuvC from Frankia casuarinae (strain DSM 45818 / CECT 9043 / HFP020203 / CcI3).